The sequence spans 184 residues: Transposon Tn917 resolvase (184 aa).

The Resolvase/invertase-type recombinase catalytic domain occupies methionine 1 to glycine 134. Serine 9 acts as the O-(5'-phospho-DNA)-serine intermediate in catalysis. Positions isoleucine 161–asparagine 180 form a DNA-binding region, H-T-H motif.

Belongs to the site-specific recombinase resolvase family.

Its function is as follows. Resolvase catalyzes the resolution (a site-specific recombination) of the cointegrated replicon to yield the final transposition products. This chain is Transposon Tn917 resolvase (tnpR), found in Enterococcus faecalis (Streptococcus faecalis).